The chain runs to 628 residues: tRNA uridine 5-carboxymethylaminomethyl modification enzyme MnmG (628 aa).

Residues 14 to 19, V126, and S181 contribute to the FAD site; that span reads GAGHAG. 273–287 serves as a coordination point for NAD(+); sequence GPRYCPSIEDKVVRF. Q370 provides a ligand contact to FAD.

The protein belongs to the MnmG family. Homodimer. Heterotetramer of two MnmE and two MnmG subunits. Requires FAD as cofactor.

The protein localises to the cytoplasm. NAD-binding protein involved in the addition of a carboxymethylaminomethyl (cmnm) group at the wobble position (U34) of certain tRNAs, forming tRNA-cmnm(5)s(2)U34. The sequence is that of tRNA uridine 5-carboxymethylaminomethyl modification enzyme MnmG from Bacillus licheniformis (strain ATCC 14580 / DSM 13 / JCM 2505 / CCUG 7422 / NBRC 12200 / NCIMB 9375 / NCTC 10341 / NRRL NRS-1264 / Gibson 46).